A 431-amino-acid chain; its full sequence is Phosphoribosylamine--glycine ligase (431 aa).

Residues 108 to 315 form the ATP-grasp domain; it reads KDFLARHEIP…LVLLVEAAFA (208 aa). 134–195 contacts ATP; sequence LQEKGAPIVI…EEFLDGEEAS (62 aa). The Mg(2+) site is built by glutamate 285 and asparagine 287.

This sequence belongs to the GARS family. It depends on Mg(2+) as a cofactor. The cofactor is Mn(2+).

It carries out the reaction 5-phospho-beta-D-ribosylamine + glycine + ATP = N(1)-(5-phospho-beta-D-ribosyl)glycinamide + ADP + phosphate + H(+). It participates in purine metabolism; IMP biosynthesis via de novo pathway; N(1)-(5-phospho-D-ribosyl)glycinamide from 5-phospho-alpha-D-ribose 1-diphosphate: step 2/2. In Pseudomonas putida (strain ATCC 47054 / DSM 6125 / CFBP 8728 / NCIMB 11950 / KT2440), this protein is Phosphoribosylamine--glycine ligase.